Reading from the N-terminus, the 658-residue chain is Pentatricopeptide repeat-containing protein 7, mitochondrial (658 aa).

The transit peptide at 1 to 29 (MRNCVSPLLFAWTKHLRLREFKIPFPNRL) directs the protein to the mitochondrion. PPR repeat units follow at residues 130–164 (VKKR…TPIW) and 220–254 (LYVE…SESL).

It localises to the mitochondrion. Its function is as follows. Mitochondrial RNA-binding protein required for the stability of the atp6 mRNA. The chain is Pentatricopeptide repeat-containing protein 7, mitochondrial (ppr7) from Schizosaccharomyces pombe (strain 972 / ATCC 24843) (Fission yeast).